The following is a 315-amino-acid chain: Methylglutaconyl-CoA hydratase, mitochondrial (315 aa).

The transit peptide at 1 to 43 directs the protein to the mitochondrion; it reads MAAAAAPGALGALSAGRVRLVAACCARLGSAAWARGTAPRRGY. An N6-acetyllysine; alternate modification is found at Lys-76. Residue Lys-76 is modified to N6-succinyllysine; alternate. The interval 81–95 is RNA-binding; the sequence is KNLLKMLSKAVDALK. At Lys-85 the chain carries N6-succinyllysine. N6-acetyllysine; alternate occurs at positions 89 and 120. Residues Lys-89 and Lys-120 each carry the N6-succinyllysine; alternate modification. 2 positions are modified to N6-succinyllysine: Lys-124 and Lys-136. N6-acetyllysine; alternate occurs at positions 180 and 187. Residues Lys-180 and Lys-187 each carry the N6-succinyllysine; alternate modification. N6-succinyllysine is present on Lys-305.

The protein belongs to the enoyl-CoA hydratase/isomerase family. As to quaternary structure, homohexamer.

The protein resides in the mitochondrion. It carries out the reaction (3S)-3-hydroxy-3-methylglutaryl-CoA = 3-methyl-(2E)-glutaconyl-CoA + H2O. The catalysed reaction is (3S)-citramalyl-CoA = itaconyl-CoA + H2O. The enzyme catalyses 3-hydroxyisovaleryl-CoA = 3-methylbut-2-enoyl-CoA + H2O. It catalyses the reaction (S)-3-hydroxyglutaryl-CoA = (2E)-glutaconyl-CoA + H2O. It functions in the pathway amino-acid degradation; L-leucine degradation; (S)-3-hydroxy-3-methylglutaryl-CoA from 3-isovaleryl-CoA: step 3/3. Catalyzes the fifth step in the leucine degradation pathway, the reversible hydration of 3-methylglutaconyl-CoA (3-MG-CoA) to 3-hydroxy-3-methylglutaryl-CoA (HMG-CoA). Can catalyze the reverse reaction but at a much lower rate in vitro. HMG-CoA is then quickly degraded by another enzyme (such as HMG-CoA lyase) to give acetyl-CoA and acetoacetate. Uses other substrates such as (2E)-glutaconyl-CoA efficiently in vitro, and to a lesser extent 3-methylcrotonyl-CoA (3-methyl-(2E)-butenoyl-CoA), crotonyl-CoA ((2E)-butenoyl-CoA) and 3-hydroxybutanoyl-CoA (the missing carboxylate reduces affinity to the active site). Originally it was identified as an RNA-binding protein as it binds to AU-rich elements (AREs) in vitro. AREs direct rapid RNA degradation and mRNA deadenylation. Might have itaconyl-CoA hydratase activity, converting itaconyl-CoA into citramalyl-CoA in the C5-dicarboxylate catabolism pathway. The C5-dicarboxylate catabolism pathway is required to detoxify itaconate, an antimicrobial metabolite and immunomodulator produced by macrophages during certain infections, that can act as a vitamin B12-poisoning metabolite. This is Methylglutaconyl-CoA hydratase, mitochondrial from Rattus norvegicus (Rat).